Consider the following 181-residue polypeptide: Prepronociceptin (181 aa).

Positions 1–19 (MKILFCDVLLLSLLSSVFS) are cleaved as a signal peptide. A propeptide spanning residues 20 to 95 (SCPEDCLTCQ…QSKASEMQHL (76 aa)) is cleaved from the precursor. Positions 103–125 (SVVQARDAEPEADAEPVADEADE) are disordered. 2 tandem repeats follow at residues 109–114 (DAEPEA) and 115–120 (DAEPVA). Positions 109–120 (DAEPEADAEPVA) are 2 X 6 AA tandem repeats of D-A-E-P-X-A. Residues 112–125 (PEADAEPVADEADE) are compositionally biased toward acidic residues. A propeptide spanning residues 174–181 (TLHQNGNV) is cleaved from the precursor.

The protein belongs to the opioid neuropeptide precursor family. Post-translationally, specific enzymatic cleavages at paired basic residues probably yield other active peptides besides nociceptin. In terms of processing, the N-terminal domain contains 6 conserved cysteines thought to be involved in disulfide bonding and/or processing. As to expression, expressed predominantly in the spinal cord and brain, being more abundant in the hypothalamus and striatum. Also found in small amounts in ovary.

It localises to the secreted. Its function is as follows. Ligand of the opioid receptor-like receptor OPRL1. It may act as a transmitter in the brain by modulating nociceptive and locomotor behavior. May be involved in neuronal differentiation and development. Functionally, blocks nociceptin action in pain transmission by inhibiting nociceptin-induced hyperalgesia and allodynia. In terms of biological role, has potent analgesic activity. The chain is Prepronociceptin (Pnoc) from Rattus norvegicus (Rat).